The following is a 511-amino-acid chain: GATOR complex protein NPRL3 (511 aa).

Residues 37–58 (KPATKAPSKDPQPSSSNPGQCV) form a disordered region.

The protein belongs to the NPR3 family. Probably part of the GATOR complex.

It localises to the lysosome membrane. As a component of the GATOR complex may function in the amino acid-sensing branch of the TORC1 signaling pathway. The sequence is that of GATOR complex protein NPRL3 (nprl-3) from Caenorhabditis elegans.